We begin with the raw amino-acid sequence, 939 residues long: Tyrosine-protein kinase Shark (939 aa).

The SH2 1 domain occupies 10 to 106 (WYHGNLSREA…GLPTKLTVPL (97 aa)). ANK repeat units follow at residues 153–185 (DGQT…SSDS), 186–218 (FGCQ…GRNI), and 220–252 (NGYV…PRTS). In terms of domain architecture, SH2 2 spans 288 to 403 (WYHGTLTREE…GLPVSLKYPV (116 aa)). 2 disordered regions span residues 410–446 (EVPS…QHPH) and 476–505 (ALFD…SLAG). Positions 496–505 (ESSVSGSLAG) are enriched in polar residues. Positions 662–921 (LVLDREIGHG…PTFVYLTEFF (260 aa)) constitute a Protein kinase domain. Residues 668–676 (IGHGEFGSV) and lysine 698 each bind ATP. Aspartate 789 acts as the Proton acceptor in catalysis. Tyrosine 927 carries the post-translational modification Phosphotyrosine.

This sequence belongs to the protein kinase superfamily. Tyr protein kinase family. As to quaternary structure, interacts with drpr; this is required for the recruitment of drpr and glial cells to severed axons and for the phagocytosis of axonal debris by glial cells following axon injury. Gastrulation embryos show expression in ectodermal cells along the cephalic furrow and ventral midline. Proctodeum, stomodeum and their derived structures (foregut, atrium, pharynx, esophagus and hindgut) continue to show expression from stage 8-9 to late embryos. Other ectodermally derived structures (frontal sac, salivary gland and labium) and developing tracheal system also show expression.

The protein localises to the cytoplasm. It catalyses the reaction L-tyrosyl-[protein] + ATP = O-phospho-L-tyrosyl-[protein] + ADP + H(+). Its function is as follows. Following axon injury, required for recruitment of drpr and glial cells to severed axons and for glial clearance of severed axons from the central nervous system. Together with Src42a and drpr, promotes the migration of macrophages to sites of wounding as part of a signaling cascade where Scr42a detects production of hydrogen peroxide at wound sites which triggers phosphorylation of drpr and subsequent recruitment and activation of shark. May be involved in signal transduction on the apical surface of ectodermal epithelial cells, regulating their polarity during invagination. Crumbs (crb) may be the intracellular signal. In Drosophila melanogaster (Fruit fly), this protein is Tyrosine-protein kinase Shark.